The chain runs to 623 residues: Kelch repeat and BTB domain-containing protein 2 (623 aa).

One can recognise a BTB domain in the interval 31 to 98; that stretch reads TDIVLIVEGT…AYTGNLAMND (68 aa). The region spanning 133 to 229 is the BACK domain; the sequence is CVRLLSFADL…IRIDALSEVT (97 aa). Ser-300 carries the phosphoserine modification. 5 Kelch repeats span residues 317-380, 381-429, 431-469, 470-529, and 535-581; these read DIYI…CCEG, YIYA…VVHD, IYVMTLNLMYCYFPRSDSWVEMAMRQTSRSFASAAAFGD, KIFY…RAVV, and CVFM…DFRC.

In terms of assembly, component of the BCR(KBTBD2) E3 ubiquitin ligase complex, at least composed of CUL3, KBTBD2 and RBX1. Interacts (via the BTB domain) with CUL3.

It participates in protein modification; protein ubiquitination. In terms of biological role, substrate-specific adapter of a BCR (BTB-CUL3-RBX1) E3 ubiquitin ligase complex that acts as a regulator of the insulin signaling pathway, modulating insulin sensitivity by limiting PIK3R1/p85alpha abundance in adipocytes. Targets PIK3R1, the regulatory subunit of phosphatidylinositol 3-kinase (PI3K), for 'Lys-48'-linked polyubiquitination and proteasome-mediated degradation. In Homo sapiens (Human), this protein is Kelch repeat and BTB domain-containing protein 2.